A 155-amino-acid chain; its full sequence is Large-conductance mechanosensitive channel (155 aa).

3 helical membrane-spanning segments follow: residues 16–36 (VVDM…VNNL), 40–60 (VILP…LYII), and 88–108 (GVFL…FLLV).

It belongs to the MscL family. In terms of assembly, homopentamer.

The protein localises to the cell inner membrane. Channel that opens in response to stretch forces in the membrane lipid bilayer. May participate in the regulation of osmotic pressure changes within the cell. This Chlorobium chlorochromatii (strain CaD3) protein is Large-conductance mechanosensitive channel.